Reading from the N-terminus, the 564-residue chain is Acetylcholine receptor subunit alpha-type deg-3 (564 aa).

Positions 1 to 20 are cleaved as a signal peptide; the sequence is MTLKIRTIIILFCVISVTTT. Topologically, residues 21–268 are extracellular; the sequence is SQSLNATLKT…SLVIQRKPLY (248 aa). Residues Asn25, Asn37, Asn125, and Asn198 are each glycosylated (N-linked (GlcNAc...) asparagine). Disulfide bonds link Cys185–Cys199 and Cys248–Cys249. 3 consecutive transmembrane segments (helical) span residues 269–289, 302–319, and 329–353; these read YLVN…TGFF, INLG…MLMV, and FVPL…LTSV. The Cytoplasmic portion of the chain corresponds to 354-526; sequence VLSVQGRRQY…WEFLATVLDR (173 aa). A helical transmembrane segment spans residues 527–547; sequence FLLIVFVGAVVIVTAGLILVG.

The protein belongs to the ligand-gated ion channel (TC 1.A.9) family. Acetylcholine receptor (TC 1.A.9.1) subfamily. In terms of assembly, the functional receptor is a heteromer of deg-3 and des-2. Interacts with ric-3; which is required for proper receptor folding.

The protein localises to the postsynaptic cell membrane. It is found in the cell membrane. Its function is as follows. Subunit of the non-synaptic neuronal acetylcholine receptor, which may play a role in chemotaxis towards choline. After binding choline or acetylcholine, the AChR responds by an extensive change in conformation that affects all subunits and leads to opening of an ion-conducting channel across the plasma membrane. The chain is Acetylcholine receptor subunit alpha-type deg-3 (deg-3) from Caenorhabditis elegans.